The chain runs to 217 residues: Probable transaldolase (217 aa).

Lys-83 acts as the Schiff-base intermediate with substrate in catalysis.

Belongs to the transaldolase family. Type 3B subfamily.

The protein resides in the cytoplasm. The catalysed reaction is D-sedoheptulose 7-phosphate + D-glyceraldehyde 3-phosphate = D-erythrose 4-phosphate + beta-D-fructose 6-phosphate. The protein operates within carbohydrate degradation; pentose phosphate pathway; D-glyceraldehyde 3-phosphate and beta-D-fructose 6-phosphate from D-ribose 5-phosphate and D-xylulose 5-phosphate (non-oxidative stage): step 2/3. Transaldolase is important for the balance of metabolites in the pentose-phosphate pathway. In Methanocaldococcus jannaschii (strain ATCC 43067 / DSM 2661 / JAL-1 / JCM 10045 / NBRC 100440) (Methanococcus jannaschii), this protein is Probable transaldolase (tal).